The primary structure comprises 279 residues: 4-hydroxy-3-methylbut-2-enyl diphosphate reductase (279 aa).

Cys-12 provides a ligand contact to [4Fe-4S] cluster. Positions 40 and 72 each coordinate (2E)-4-hydroxy-3-methylbut-2-enyl diphosphate. Residues His-40 and His-72 each contribute to the dimethylallyl diphosphate site. His-40 and His-72 together coordinate isopentenyl diphosphate. Cys-94 provides a ligand contact to [4Fe-4S] cluster. His-122 provides a ligand contact to (2E)-4-hydroxy-3-methylbut-2-enyl diphosphate. Residue His-122 coordinates dimethylallyl diphosphate. Position 122 (His-122) interacts with isopentenyl diphosphate. The Proton donor role is filled by Glu-124. (2E)-4-hydroxy-3-methylbut-2-enyl diphosphate is bound at residue Thr-161. Cys-189 serves as a coordination point for [4Fe-4S] cluster. Ser-217, Asn-219, and Ser-261 together coordinate (2E)-4-hydroxy-3-methylbut-2-enyl diphosphate. Residues Ser-217, Asn-219, and Ser-261 each coordinate dimethylallyl diphosphate. 3 residues coordinate isopentenyl diphosphate: Ser-217, Asn-219, and Ser-261.

This sequence belongs to the IspH family. It depends on [4Fe-4S] cluster as a cofactor.

It carries out the reaction isopentenyl diphosphate + 2 oxidized [2Fe-2S]-[ferredoxin] + H2O = (2E)-4-hydroxy-3-methylbut-2-enyl diphosphate + 2 reduced [2Fe-2S]-[ferredoxin] + 2 H(+). The enzyme catalyses dimethylallyl diphosphate + 2 oxidized [2Fe-2S]-[ferredoxin] + H2O = (2E)-4-hydroxy-3-methylbut-2-enyl diphosphate + 2 reduced [2Fe-2S]-[ferredoxin] + 2 H(+). The protein operates within isoprenoid biosynthesis; dimethylallyl diphosphate biosynthesis; dimethylallyl diphosphate from (2E)-4-hydroxy-3-methylbutenyl diphosphate: step 1/1. It participates in isoprenoid biosynthesis; isopentenyl diphosphate biosynthesis via DXP pathway; isopentenyl diphosphate from 1-deoxy-D-xylulose 5-phosphate: step 6/6. Its function is as follows. Catalyzes the conversion of 1-hydroxy-2-methyl-2-(E)-butenyl 4-diphosphate (HMBPP) into a mixture of isopentenyl diphosphate (IPP) and dimethylallyl diphosphate (DMAPP). Acts in the terminal step of the DOXP/MEP pathway for isoprenoid precursor biosynthesis. The protein is 4-hydroxy-3-methylbut-2-enyl diphosphate reductase of Syntrophotalea carbinolica (strain DSM 2380 / NBRC 103641 / GraBd1) (Pelobacter carbinolicus).